A 296-amino-acid chain; its full sequence is Large ribosomal subunit protein uL18A (296 aa).

The interval 251–296 is disordered; it reads PVHEKKPKKEVKKKRWNRAKLSLEQKKDRVAQKKASFLRAQEKADS. Over residues 255 to 268 the composition is skewed to basic residues; the sequence is KKPKKEVKKKRWNR. Positions 271–281 are enriched in basic and acidic residues; sequence LSLEQKKDRVA.

Belongs to the universal ribosomal protein uL18 family. Component of the large ribosomal subunit (LSU). Part of a LSU subcomplex, the 5S RNP which is composed of the 5S RNA, RPL5 and RPL11.

It is found in the cytoplasm. Its subcellular location is the nucleus. The protein localises to the nucleolus. Component of the ribosome, a large ribonucleoprotein complex responsible for the synthesis of proteins in the cell. The small ribosomal subunit (SSU) binds messenger RNAs (mRNAs) and translates the encoded message by selecting cognate aminoacyl-transfer RNA (tRNA) molecules. The large subunit (LSU) contains the ribosomal catalytic site termed the peptidyl transferase center (PTC), which catalyzes the formation of peptide bonds, thereby polymerizing the amino acids delivered by tRNAs into a polypeptide chain. The nascent polypeptides leave the ribosome through a tunnel in the LSU and interact with protein factors that function in enzymatic processing, targeting, and the membrane insertion of nascent chains at the exit of the ribosomal tunnel. As part of the 5S RNP/5S ribonucleoprotein particle it is an essential component of the LSU, required for its formation and the maturation of rRNAs. It also couples ribosome biogenesis to p53/TP53 activation. As part of the 5S RNP it accumulates in the nucleoplasm and inhibits MDM2, when ribosome biogenesis is perturbed, mediating the stabilization and the activation of TP53. The protein is Large ribosomal subunit protein uL18A (rpl5-a) of Xenopus laevis (African clawed frog).